The primary structure comprises 207 residues: Putative acetyltransferase C18B11.09c (207 aa).

Belongs to the transferase hexapeptide repeat family.

The polypeptide is Putative acetyltransferase C18B11.09c (Schizosaccharomyces pombe (strain 972 / ATCC 24843) (Fission yeast)).